Consider the following 374-residue polypeptide: MNALFIIIFMIVVGAIIGGVTNVIAIRMLFHPFKPYYIFKFRVPFTPGLIPKRREEIATKIGQVIEEHLLTETLINEKLKSEQSQQAIESMIQQQLQKLTKDQLSIKQITSQIDIDLEQVLQTNGNQYIASQLNNYYTKHQNQTIASLLPNQLVTFLDQHVDNATDLLCDRARNYLSSAKGTQDINDMLDTFFNEKGKLIGMLQMFMTKESIADRIQQELIRLTSHPKARAIVTSLITNEYQTFKDKSLNKLLDTSQFNEIAENLSMYVTTYASKQANKPVVTLMPQFVDYLESQLSSKLANLIIEQLSIHLSTIMKKVDLRGLIEEQINTFDLDYIEKLIIEIANKELKLIMSLGFILGGIIGFFQGLVAIFV.

The next 2 helical transmembrane spans lie at 4-24 (LFII…TNVI) and 354-374 (SLGF…AIFV).

Belongs to the UPF0754 family.

The protein resides in the cell membrane. The sequence is that of UPF0754 membrane protein SAR1937 from Staphylococcus aureus (strain MRSA252).